The primary structure comprises 318 residues: uncharacterized protein (318 aa).

Residues 67–157 adopt a coiled-coil conformation; that stretch reads LAFDELEKEK…SLKAIQTSQE (91 aa). Residues 172 to 318 are disordered; that stretch reads ESTNKVEKNA…KGFFARLFNL (147 aa). Composition is skewed to basic and acidic residues over residues 175 to 193 and 219 to 236; these read NKVE…KDSK and KVDK…EKAS. The segment covering 237-248 has biased composition (polar residues); the sequence is VEQSKNGNAAET. 2 stretches are compositionally biased toward basic and acidic residues: residues 249 to 274 and 300 to 310; these read SNKE…HAEA and SEPKPQEEKKG.

This is an uncharacterized protein from Staphylococcus aureus (strain MW2).